The primary structure comprises 173 residues: Glucagon family neuropeptides (173 aa).

A signal peptide spans 1–22; it reads MSSKATLALLIYGIIMHYSVYS. The propeptide occupies 23-80; it reads SPLGLNYPNLRLENEVYDEDGNSLPALAFDSDQIAIRSPPSVADDLYTLYYPPEKGTE. The residue at position 166 (Lys166) is a Lysine amide. Residues 170-173 constitute a propeptide that is removed on maturation; sequence LGYL.

It belongs to the glucagon family.

Its subcellular location is the secreted. Its function is as follows. Primary role of GHRH is to release GH from the pituitary. PACAP plays pivotal roles as a neurotransmitter and/or a neuromodulator. The protein is Glucagon family neuropeptides of Oncorhynchus nerka (Sockeye salmon).